Reading from the N-terminus, the 57-residue chain is Large ribosomal subunit protein eL20 (57 aa).

It belongs to the eukaryotic ribosomal protein eL20 family. Part of the 50S ribosomal subunit. Binds 23S rRNA.

This is Large ribosomal subunit protein eL20 from Archaeoglobus fulgidus (strain ATCC 49558 / DSM 4304 / JCM 9628 / NBRC 100126 / VC-16).